We begin with the raw amino-acid sequence, 250 residues long: Adapter protein MecA (250 aa).

The protein belongs to the MecA family. In terms of assembly, homodimer.

In terms of biological role, enables the recognition and targeting of unfolded and aggregated proteins to the ClpC protease or to other proteins involved in proteolysis. The protein is Adapter protein MecA of Streptococcus sanguinis (strain SK36).